The sequence spans 269 residues: Protein NETWORKED 3A (269 aa).

An NAB domain is found at 6–87; it reads SKWWWIGNHN…ERYDLLRPSS (82 aa). Residues 87–113 form a disordered region; it reads SVHKHGSDSESHEKSSTCDESSWSEAC. Positions 91–103 are enriched in basic and acidic residues; it reads HGSDSESHEKSST. Residues 155-214 are a coiled coil; it reads NGNSEMMKIEIERLREENKVYSEMVREKDEEKREAIRQMSVAIQMLKEENSELKKRVTNT.

The protein belongs to the NET family.

It is found in the cytoplasm. It localises to the cytoskeleton. Its subcellular location is the nucleus membrane. Plant-specific actin binding protein. May be part of a membrane-cytoskeletal adapter complex. The sequence is that of Protein NETWORKED 3A from Arabidopsis thaliana (Mouse-ear cress).